Here is a 24-residue protein sequence, read N- to C-terminus: Pseudin-2 (24 aa).

In terms of tissue distribution, expressed by the skin glands.

Its subcellular location is the secreted. Its function is as follows. Antimicrobial peptide with activity against fungus (C.albicans) and Gram-positive and Gram-negative bacteria (S.aureus and E.coli). Also has low hemolytic activity against human erythrocytes. The protein is Pseudin-2 of Pseudis paradoxa (Paradoxical frog).